The following is a 333-amino-acid chain: Cytochrome f (333 aa).

Positions 1–44 (MRNASVTARLTRSVRAIVKTLLIAIATVTFYFSCDLALPQSAAA) are cleaved as a signal peptide. Heme is bound by residues Y45, C66, C69, and H70. Residues 301-318 (GLIAFVALVMLAQVMLVL) form a helical membrane-spanning segment.

Belongs to the cytochrome f family. The 4 large subunits of the cytochrome b6-f complex are cytochrome b6, subunit IV (17 kDa polypeptide, PetD), cytochrome f and the Rieske protein, while the 4 small subunits are PetG, PetL, PetM and PetN. The complex functions as a dimer. The cofactor is heme.

Its subcellular location is the cellular thylakoid membrane. Its function is as follows. Component of the cytochrome b6-f complex, which mediates electron transfer between photosystem II (PSII) and photosystem I (PSI), cyclic electron flow around PSI, and state transitions. The chain is Cytochrome f (petA) from Desmonostoc sp. (strain PCC 7906) (Nostoc sp. (strain PCC 7906)).